The following is a 564-amino-acid chain: Probable lysosomal cobalamin transporter (564 aa).

A run of 9 helical transmembrane segments spans residues 8–28 (LIWSVYGVAIAILIAVASTFI), 41–61 (VTLICIISITVLLATVLLLPV), 94–114 (TIVYYSLYTVDALLCLIGIPF), 144–164 (YTLFFVAILIVLFLVGFFIPT), 188–208 (ALTFSVGILTTLGLSLYIIYT), 312–332 (LLAGFVLLLAALFLWTSLCVT), 375–395 (VIFTLIVLFLFCSSVVGIAAF), 418–438 (LLLTSMLMLITLALNYSVAVI), and 506–526 (FFGAVFFWAQFIFLGLYLLVL).

This sequence belongs to the LIMR family. LMBRD1 subfamily.

The protein localises to the lysosome membrane. Probable lysosomal cobalamin transporter. Required to export cobalamin from lysosomes allowing its conversion to cofactors. This chain is Probable lysosomal cobalamin transporter, found in Aspergillus clavatus (strain ATCC 1007 / CBS 513.65 / DSM 816 / NCTC 3887 / NRRL 1 / QM 1276 / 107).